A 154-amino-acid polypeptide reads, in one-letter code: Myoglobin (154 aa).

The Globin domain maps to 2-148 (GLSDGEWQMV…FRNDIAAKYK (147 aa)). Phosphoserine is present on residues S4 and S32. Residue H65 coordinates nitrite. Residue H65 coordinates O2. T68 carries the phosphothreonine modification. A heme b-binding site is contributed by H94. Residues S121 and S133 each carry the phosphoserine modification.

It belongs to the globin family. In terms of assembly, monomeric.

It is found in the cytoplasm. The protein resides in the sarcoplasm. The enzyme catalyses Fe(III)-heme b-[protein] + nitric oxide + H2O = Fe(II)-heme b-[protein] + nitrite + 2 H(+). It catalyses the reaction H2O2 + AH2 = A + 2 H2O. Monomeric heme protein which primary function is to store oxygen and facilitate its diffusion within muscle tissues. Reversibly binds oxygen through a pentacoordinated heme iron and enables its timely and efficient release as needed during periods of heightened demand. Depending on the oxidative conditions of tissues and cells, and in addition to its ability to bind oxygen, it also has a nitrite reductase activity whereby it regulates the production of bioactive nitric oxide. Under stress conditions, like hypoxia and anoxia, it also protects cells against reactive oxygen species thanks to its pseudoperoxidase activity. The protein is Myoglobin of Rattus norvegicus (Rat).